A 173-amino-acid chain; its full sequence is Shikimate kinase (173 aa).

14–19 provides a ligand contact to ATP; that stretch reads GAGKST. Residue Ser-18 participates in Mg(2+) binding. Substrate-binding residues include Asp-36, Arg-60, and Gly-82. An ATP-binding site is contributed by Arg-120. Position 139 (Arg-139) interacts with substrate. Residue Gln-156 participates in ATP binding.

This sequence belongs to the shikimate kinase family. In terms of assembly, monomer. It depends on Mg(2+) as a cofactor.

It localises to the cytoplasm. It catalyses the reaction shikimate + ATP = 3-phosphoshikimate + ADP + H(+). It functions in the pathway metabolic intermediate biosynthesis; chorismate biosynthesis; chorismate from D-erythrose 4-phosphate and phosphoenolpyruvate: step 5/7. Catalyzes the specific phosphorylation of the 3-hydroxyl group of shikimic acid using ATP as a cosubstrate. This is Shikimate kinase from Actinobacillus pleuropneumoniae serotype 5b (strain L20).